The chain runs to 732 residues: Elongation factor 2 (732 aa).

Positions glutamate 19–isoleucine 260 constitute a tr-type G domain. GTP contacts are provided by residues alanine 28–threonine 35, aspartate 94–histidine 98, and asparagine 148–aspartate 151. Histidine 597 bears the Diphthamide mark.

This sequence belongs to the TRAFAC class translation factor GTPase superfamily. Classic translation factor GTPase family. EF-G/EF-2 subfamily.

The protein resides in the cytoplasm. Its function is as follows. Catalyzes the GTP-dependent ribosomal translocation step during translation elongation. During this step, the ribosome changes from the pre-translocational (PRE) to the post-translocational (POST) state as the newly formed A-site-bound peptidyl-tRNA and P-site-bound deacylated tRNA move to the P and E sites, respectively. Catalyzes the coordinated movement of the two tRNA molecules, the mRNA and conformational changes in the ribosome. In Pyrococcus horikoshii (strain ATCC 700860 / DSM 12428 / JCM 9974 / NBRC 100139 / OT-3), this protein is Elongation factor 2 (fusA).